Consider the following 123-residue polypeptide: MPTINQLIRNTRQPIRNVTKSPALRGCPQRRGTCTRVYTITPKKPNSALRKVARVRLTSGFEITAYIPGIGHNLQEHSVVLVRGGRVKDLPGVRYHIVRGTLDAVGVKDRQQGRSKYGVKKPK.

This sequence belongs to the universal ribosomal protein uS12 family. Part of the 30S ribosomal subunit.

It is found in the plastid. The protein resides in the chloroplast. Its function is as follows. With S4 and S5 plays an important role in translational accuracy. Located at the interface of the 30S and 50S subunits. This is Small ribosomal subunit protein uS12cz/uS12cy (rps12-A) from Atropa belladonna (Belladonna).